The sequence spans 72 residues: Translation initiation factor IF-1 (72 aa).

Residues M1 to K72 enclose the S1-like domain.

This sequence belongs to the IF-1 family. Component of the 30S ribosomal translation pre-initiation complex which assembles on the 30S ribosome in the order IF-2 and IF-3, IF-1 and N-formylmethionyl-tRNA(fMet); mRNA recruitment can occur at any time during PIC assembly.

It localises to the cytoplasm. One of the essential components for the initiation of protein synthesis. Stabilizes the binding of IF-2 and IF-3 on the 30S subunit to which N-formylmethionyl-tRNA(fMet) subsequently binds. Helps modulate mRNA selection, yielding the 30S pre-initiation complex (PIC). Upon addition of the 50S ribosomal subunit IF-1, IF-2 and IF-3 are released leaving the mature 70S translation initiation complex. In Staphylococcus aureus (strain USA300 / TCH1516), this protein is Translation initiation factor IF-1.